We begin with the raw amino-acid sequence, 193 residues long: MKSYFFFILSNILIDNFILVKFLGLCPFIGASNQIKQAFGISFATSFVVVVSTVLLWFVNFFILLPFDLVYLRIIVYMLIISFGVQLIEIILRGTSPILYRILGIFLPLITTNCAVLAIPLFSLYLNHTFLESILYAVSASFGFTLVMVIFSSIRERILLSDVPLAFQGSPIVLITVSLISIVFMGFKGLVRI.

6 consecutive transmembrane segments (helical) span residues 5 to 25, 47 to 67, 72 to 92, 102 to 122, 134 to 154, and 171 to 191; these read FFFI…FLGL, FVVV…LLPF, LRII…EIIL, ILGI…IPLF, ILYA…FSSI, and PIVL…KGLV.

It belongs to the NqrDE/RnfAE family. As to quaternary structure, the complex is composed of six subunits: RnfA, RnfB, RnfC, RnfD, RnfE and RnfG.

Its subcellular location is the cell inner membrane. In terms of biological role, part of a membrane-bound complex that couples electron transfer with translocation of ions across the membrane. This is Ion-translocating oxidoreductase complex subunit A from Buchnera aphidicola subsp. Schizaphis graminum (strain Sg).